The chain runs to 570 residues: MQGPLYIGFDLSTQQLKGLVVNSDLKVVYVSKFDFDADSHGFPIKKGVLTNEAEHEVFAPVALWLQALDGVLEGLRKQGMDFSQIKGISGAGQQHGSVYWGENAEKLLKELDASKTLEEQLDGAFSHPFSPNWQDSSTQKECDEFDAALGGQSELAFATGSKAHHRFTGPQIMRFQRKYPDVYKKTSRISLVSSFIASLFLGHIAPMDISDVCGMNLWNIKKGAYDEKLLQLCAGSSGVDDLKRKLGDVPEDGGIHLGPIDRYYVERYGFSPDCTIIPATGDNPATILALPLRASDAMVSLGTSTTFLMSTPSYKPDPATHFFNHPTTAGLYMFMLCYKNGGLARELVRDAVNEKLGEKPSTSWANFDKVTLETPPMGQKADSDPMKLGLFFPRPEIVPNLRSGQWRFDYNPKDGSLQPSNGGWDEPFDEARAIVESQMLSLRLRSRGLTQSPGEGIPAQPRRVYLVGGGSKNKAIAKVAGEILGGSEGVYKLEIGDNACALGAAYKAVWAMERAEGQTFEDLIGKRWHEEEFIEKIADGYQPGVFERYGQAAEGFEKMELEVLRQEGKH.

4 residues coordinate substrate: histidine 95, arginine 166, aspartate 282, and asparagine 283. ATP contacts are provided by residues tryptophan 364, 469-470, and asparagine 473; that span reads GG.

This sequence belongs to the FGGY kinase family.

The protein localises to the cytoplasm. The enzyme catalyses D-xylulose + ATP = D-xylulose 5-phosphate + ADP + H(+). Its function is as follows. Highly specific D-xylulose kinase which participates in the catabolism of xylose. Xylose is a major component of hemicelluloses such as xylan. Most fungi utilize D-xylose via three enzymatic reactions, xylose reductase (XR), xylitol dehydrogenase (XDH), and xylulokinase, to form xylulose 5-phosphate, which enters pentose phosphate pathway. In Aspergillus niger (strain ATCC MYA-4892 / CBS 513.88 / FGSC A1513), this protein is Probable D-xylulose kinase A (xkiA).